The following is a 193-amino-acid chain: Recombination protein RecR (193 aa).

The C4-type; degenerate zinc-finger motif lies at 61–76; sequence CASCNALSETEVSEIC. The Toprim domain maps to 84 to 170; the sequence is SQLCMVLHPR…TFTKIAQGVP (87 aa).

It belongs to the RecR family.

May play a role in DNA repair. It seems to be involved in an RecBC-independent recombinational process of DNA repair. It may act with RecF and RecO. The protein is Recombination protein RecR of Helicobacter pylori (strain J99 / ATCC 700824) (Campylobacter pylori J99).